A 158-amino-acid polypeptide reads, in one-letter code: U4/U6.U5 small nuclear ribonucleoprotein 27 kDa protein (158 aa).

Basic residues predominate over residues M1–E30. Residues M1–T100 form a disordered region. Over residues R31 to R41 the composition is skewed to basic and acidic residues. Positions R42–S62 are enriched in basic residues. Basic and acidic residues predominate over residues R69 to A86.

The protein belongs to the SNUT3 family. Part of a tri-snRNP complex.

It is found in the nucleus. Functionally, may play a role in mRNA splicing. In Danio rerio (Zebrafish), this protein is U4/U6.U5 small nuclear ribonucleoprotein 27 kDa protein (snrnp27).